Reading from the N-terminus, the 1340-residue chain is TSET complex member tstE (1340 aa).

A compositionally biased stretch (low complexity) spans 56–67 (NQSQTSPNSNDG). Disordered stretches follow at residues 56–75 (NQSQ…GSGG) and 110–131 (SGSG…GGGQ). 4 WD repeats span residues 208-246 (VNQI…VIGK), 250-294 (DPTE…LQTI), 345-384 (GHKK…SFLN), and 397-436 (IEHS…NPQE). Residues 1216 to 1251 (KSHMSSTTTLRRSPSIENIRTTSTTFDSSKFNTDNQ) show a composition bias toward polar residues. A disordered region spans residues 1216 to 1340 (KSHMSSTTTL…TPTPTTTLSS (125 aa)). Acidic residues predominate over residues 1252–1275 (ELFDDDSDDDSDSGADADVDSENE). Positions 1286-1318 (ASLQHNDNSSLTNITVTDNDSNLDQDITSNTGS) are enriched in polar residues. The span at 1328–1340 (LSSTPTPTTTLSS) shows a compositional bias: low complexity.

As to quaternary structure, component of the TSET complex, a heterohexamer composed of tstA, tstB, tstC, tstD, tstE and tstF, which may act in plasma membrane turnover. tstA, tstB, tstC and tstD are likely to be the core complex members with tstE and tstF acting as associated scaffold proteins.

The chain is TSET complex member tstE from Dictyostelium discoideum (Social amoeba).